The primary structure comprises 372 residues: Chaperone protein DnaJ (372 aa).

A J domain is found at D5–G70. The CR-type zinc-finger motif lies at G134–E212. C147, C150, C164, C167, C186, C189, C200, and C203 together coordinate Zn(2+). 4 CXXCXGXG motif repeats span residues C147–G154, C164–G171, C186–G193, and C200–G207.

Belongs to the DnaJ family. Homodimer. The cofactor is Zn(2+).

The protein localises to the cytoplasm. Participates actively in the response to hyperosmotic and heat shock by preventing the aggregation of stress-denatured proteins and by disaggregating proteins, also in an autonomous, DnaK-independent fashion. Unfolded proteins bind initially to DnaJ; upon interaction with the DnaJ-bound protein, DnaK hydrolyzes its bound ATP, resulting in the formation of a stable complex. GrpE releases ADP from DnaK; ATP binding to DnaK triggers the release of the substrate protein, thus completing the reaction cycle. Several rounds of ATP-dependent interactions between DnaJ, DnaK and GrpE are required for fully efficient folding. Also involved, together with DnaK and GrpE, in the DNA replication of plasmids through activation of initiation proteins. The protein is Chaperone protein DnaJ of Wolbachia pipientis subsp. Culex pipiens (strain wPip).